We begin with the raw amino-acid sequence, 169 residues long: S-ribosylhomocysteine lyase (169 aa).

Residues His-54, His-58, and Cys-128 each contribute to the Fe cation site.

This sequence belongs to the LuxS family. In terms of assembly, homodimer. Fe cation is required as a cofactor.

The catalysed reaction is S-(5-deoxy-D-ribos-5-yl)-L-homocysteine = (S)-4,5-dihydroxypentane-2,3-dione + L-homocysteine. Its function is as follows. Involved in the synthesis of autoinducer 2 (AI-2) which is secreted by bacteria and is used to communicate both the cell density and the metabolic potential of the environment. The regulation of gene expression in response to changes in cell density is called quorum sensing. Catalyzes the transformation of S-ribosylhomocysteine (RHC) to homocysteine (HC) and 4,5-dihydroxy-2,3-pentadione (DPD). The sequence is that of S-ribosylhomocysteine lyase from Shewanella piezotolerans (strain WP3 / JCM 13877).